Consider the following 238-residue polypeptide: tRNA (guanine-N(7)-)-methyltransferase (238 aa).

Glutamate 70, aspartate 95, aspartate 122, and aspartate 145 together coordinate S-adenosyl-L-methionine. Aspartate 145 is an active-site residue. Substrate-binding positions include lysine 149, aspartate 181, and 216–219 (TKFE).

It belongs to the class I-like SAM-binding methyltransferase superfamily. TrmB family.

It catalyses the reaction guanosine(46) in tRNA + S-adenosyl-L-methionine = N(7)-methylguanosine(46) in tRNA + S-adenosyl-L-homocysteine. The protein operates within tRNA modification; N(7)-methylguanine-tRNA biosynthesis. Catalyzes the formation of N(7)-methylguanine at position 46 (m7G46) in tRNA. This chain is tRNA (guanine-N(7)-)-methyltransferase, found in Neisseria meningitidis serogroup C / serotype 2a (strain ATCC 700532 / DSM 15464 / FAM18).